The sequence spans 89 residues: Small ribosomal subunit protein uS15 (89 aa).

The protein belongs to the universal ribosomal protein uS15 family. Part of the 30S ribosomal subunit. Forms a bridge to the 50S subunit in the 70S ribosome, contacting the 23S rRNA.

Its function is as follows. One of the primary rRNA binding proteins, it binds directly to 16S rRNA where it helps nucleate assembly of the platform of the 30S subunit by binding and bridging several RNA helices of the 16S rRNA. Functionally, forms an intersubunit bridge (bridge B4) with the 23S rRNA of the 50S subunit in the ribosome. This Vibrio parahaemolyticus serotype O3:K6 (strain RIMD 2210633) protein is Small ribosomal subunit protein uS15.